Reading from the N-terminus, the 249-residue chain is Elsinochromes biosynthesis cluster protein HP3 (249 aa).

Asparagine 106 carries N-linked (GlcNAc...) asparagine glycosylation. Residues 138–158 (VVFAFMLSAWLVWLITVYAFA) form a helical membrane-spanning segment.

It is found in the membrane. Part of the gene cluster that mediates the biosynthesis of elsinochromes, pigments consisting of at least four interconvertible tautomers (A, B, C and D) that have a core phenolic quinone to which various side chains are attached and which play an important role in fungal pathogenesis. The non-reducing polyketide synthase PKS1 was proposed to iteratively catalyze decarboxylation between acetyl-CoA and malonyl-CoA subunits for polyketide chain elongation. The released polyketide undergoes cyclization to form an aromatic ring, and proceeds via serial modification steps to produce the heptaketide back- bone of elsinochrome. As elsinochrome has a symmetrical structure, two identical heptaketides are fused to form a core 1,2-dihydrobenzo-perylene ring structure, which can then be successively modified to produce the various derivatives of elsinochrome. Some of these reactions may be cooperatively carried out, at least in part, by the products of RDT1, OXR1 and PKS1. PRF1, embedded within the elsinochrome cluster possibly functions to stabilize some of the biosynthetic enzymes required for elsinochrome production. As prefoldin is a hexamer containing 2 a and 4 b subunits, additional prefoldin subunits, whose coding genes may not immediately link to the elsinochrome biosynthetic gene cluster, are required to fulfill the chaperone function. In addition, no methyltransferase-coding gene exists within the biosynthetic gene cluster, even though elsinochrome has four methyl groups at positions C3, C7, C8 and C12. Apparently, the identified gene cluster does not contain the entire entourage of genes responsible for elsinochrome biosynthesis. Once elsinochrome is synthesized, it must be exported outside the fungal cells, which is probably accomplished by the ECT1 transporter, to avoid toxicity. This is Elsinochromes biosynthesis cluster protein HP3 from Elsinoe fawcettii (Citrus scab fungus).